A 90-amino-acid chain; its full sequence is Small ribosomal subunit protein uS15c (90 aa).

Belongs to the universal ribosomal protein uS15 family. As to quaternary structure, part of the 30S ribosomal subunit.

Its subcellular location is the plastid. The protein localises to the chloroplast. This chain is Small ribosomal subunit protein uS15c (rps15-A), found in Brachypodium distachyon (Purple false brome).